A 423-amino-acid polypeptide reads, in one-letter code: Large ribosomal subunit protein mL37 (423 aa).

The transit peptide at 1–29 (MALASGPALRALAGSGRLGLGGYGTPKRG) directs the protein to the mitochondrion.

It belongs to the mitochondrion-specific ribosomal protein mL37 family. In terms of assembly, component of the mitochondrial ribosome large subunit (39S) which comprises a 16S rRNA and about 50 distinct proteins.

It is found in the mitochondrion. The polypeptide is Large ribosomal subunit protein mL37 (Mrpl37) (Mus musculus (Mouse)).